The sequence spans 867 residues: MSAGWRTLLLRIGDRCPEYGGSADHKEHIETCYGVLCREYEHSKDAMFEFLLQCADQLPHKIPFFGVLIGLINLENEDFSKGIVDTTHANLQDALHNENRDRIRILLRFLCGLMCSKVVLPNSIIETFEALLSSAATILDEETGNPSWQPRADFYVYCILASLPWGGSELFEQVPDEFERVLVGIQSYISIRRHFDDIAFSVFETDEGNSPNKKDFIEDLWERIQVLSRNGWKVKSVPKPHLSFEAQLVAGVSHRFSPISCPPPTISQSSSEIVKGQEKHEADLKYPQRLRRLHIFPTNKAENMQPVDRFVVEECILDVLLFFNGCRKECAFYLVSLPVPFRYEYLMAETIFSQLLLLPNPPFRPIYYTLVIIDLCKALPGAFPSVVVGAVHALFDRISNMDMECRTRLILWFSHHLSNFQFIWPWQEWAYVKDLPKWAPQRVFVQEVLEREIRLSYFDKIKQSIEDAVELEELLPPKAGPNFRYHSDEGKESTDGHRLSKELVAMVRGRKTQGDIISWVDEKIIPVNGAKFALDVVSQTLLDIGSKSFTHLITVLERYGQIISKLCPNEEMQLLLMDEVSAYWKNSTQMIAIAIDRMMGYRLLSNLAIVKWVFSPANVDQFHVSDRPWEILRNAVSKTYNRIFDLRKEIQTLRKGLQAAKEASEKAARELEEAKSIIEIVDGQPVPSENPGRLRRLQARADKAKEGEVTTEESLEAKEALLARGLEESKELLRLLFKSFVEVLTERLPPISADGDVPNLRAGDPNVNSSARDPEATTMEIDNENGGDNDSQLNGQNKKISHNVGELEQWCLCTLGYLKSFSRQYATEIWSHIAMLDQEIFVGNIHPLIRKAAFSGLCRPTSEGSHL.

Residues 9-228 (LLRIGDRCPE…DLWERIQVLS (220 aa)) form the MIF4G domain. Residues 752–797 (SADGDVPNLRAGDPNVNSSARDPEATTMEIDNENGGDNDSQLNGQN) are disordered. A compositionally biased stretch (polar residues) spans 788–797 (DNDSQLNGQN).

It belongs to the NCBP1 family. As to quaternary structure, component of the nuclear cap-binding complex (CBC), a heterodimer composed of ABH1/CBP80 and CBP20 that interacts with m7GpppG-capped RNA.

Its subcellular location is the nucleus. The protein localises to the cytoplasm. Its function is as follows. Component of the cap-binding complex (CBC), which binds cotranscriptionally to the 5'-cap of pre-mRNAs and is involved in various processes such as pre-mRNA splicing and RNA-mediated gene silencing (RNAi) by microRNAs (miRNAs). The CBC complex is involved in miRNA-mediated RNA interference and is required for primary miRNA processing. In the CBC complex, ABH1/CBP80 does not bind directly capped RNAs (m7GpppG-capped RNA) but is required to stabilize the movement of the N-terminal loop of CBP20 and lock the CBC into a high affinity cap-binding state with the cap structure. This is Nuclear cap-binding protein subunit 1 (ABH1) from Oryza sativa subsp. japonica (Rice).